The following is a 236-amino-acid chain: 2-C-methyl-D-erythritol 4-phosphate cytidylyltransferase (236 aa).

Belongs to the IspD/TarI cytidylyltransferase family. IspD subfamily.

The enzyme catalyses 2-C-methyl-D-erythritol 4-phosphate + CTP + H(+) = 4-CDP-2-C-methyl-D-erythritol + diphosphate. The protein operates within isoprenoid biosynthesis; isopentenyl diphosphate biosynthesis via DXP pathway; isopentenyl diphosphate from 1-deoxy-D-xylulose 5-phosphate: step 2/6. Functionally, catalyzes the formation of 4-diphosphocytidyl-2-C-methyl-D-erythritol from CTP and 2-C-methyl-D-erythritol 4-phosphate (MEP). The sequence is that of 2-C-methyl-D-erythritol 4-phosphate cytidylyltransferase from Burkholderia thailandensis (strain ATCC 700388 / DSM 13276 / CCUG 48851 / CIP 106301 / E264).